A 94-amino-acid polypeptide reads, in one-letter code: Acylphosphatase (94 aa).

In terms of domain architecture, Acylphosphatase-like spans arginine 7–aspartate 94. Catalysis depends on residues arginine 22 and asparagine 40.

The protein belongs to the acylphosphatase family.

It carries out the reaction an acyl phosphate + H2O = a carboxylate + phosphate + H(+). In Paenarthrobacter aurescens (strain TC1), this protein is Acylphosphatase (acyP).